The following is a 744-amino-acid chain: MELEKVKINSLHCNDAVLSSHQPSPSATHPQSVPSKANAVTEASIIEKTNLQHNVQEDNSYNRDCDSPVSSSSEPEKELDDLRYLHSSSLTNSVVVGKSTGSLNGAYSITSVTSKTKTLEPNSASGSACLTIAPTADHIKKRIPSSRTPTRKALRIKFYRNGDRFYPGITIPVSNERYRSFERLFEDLTRLLEENVKIPGAVRTIYNMCGKKITSLDELEDGQSYVCSCNNENFKKVEYNTGSQPLSNLTLTNSRSNSHRLAKCRPSSPLKNGLLAGSNPLPTCGGGTGNGSPHIASRSSDRVTVVHPRIVTLIRSGTKPRRIMRLLLNKRNSPSFDHVLTAITQVVRLDTGYVRKVFTLSGVSVVRLSDFFGSDDVFFAYGTERINTAEDFKLEAEEHRAINVIRKTMRTTGTTCKGPKPKMPIKSKKVYPPVVDSEAFKAATTPEDDRHAALLTSTGMEINELPSNIRNTYTLGRIIGDGNFAIVFKIKHRQTGHSYALKIIDKNKCKGKEHYIDAEVRVMKKLNHPHIISLILSVDQNTNMYLVLEYVSGGDLFDAITQVTRFSESQSRIMIRHLGAAMTYLHSMGIVHRDIKPENLLVKLDEHGHVLELKLADFGLACEVNDLLYAVCGTPTYVAPEILLEVGYGLKIDVWAAGIILYILLCGFPPFVAPDNQQEPLFDAIISGIYEFPDPYWSDIGDGVRDLIANMLQADPDVRFTSEDILDHPWTIGNQGNECTTYKR.

Residues 17-35 (VLSSHQPSPSATHPQSVPS) show a composition bias toward polar residues. Disordered regions lie at residues 17-38 (VLSS…SKAN) and 54-78 (NVQE…PEKE). 2 Doublecortin domains span residues 154 to 240 (LRIK…VEYN) and 309 to 392 (RIVT…AEDF). A Protein kinase domain is found at 473-731 (YTLGRIIGDG…SEDILDHPWT (259 aa)). ATP is bound by residues 479-487 (IGDGNFAIV) and lysine 502. The Proton acceptor role is filled by aspartate 594.

Belongs to the protein kinase superfamily. CAMK Ser/Thr protein kinase family. CaMK subfamily.

The enzyme catalyses L-seryl-[protein] + ATP = O-phospho-L-seryl-[protein] + ADP + H(+). The catalysed reaction is L-threonyl-[protein] + ATP = O-phospho-L-threonyl-[protein] + ADP + H(+). The polypeptide is Serine/threonine-protein kinase GM11705 (Drosophila sechellia (Fruit fly)).